A 331-amino-acid polypeptide reads, in one-letter code: 2-keto-3-deoxygluconate permease (331 aa).

The next 10 membrane-spanning stretches (helical) occupy residues 10–30 (IPGG…TLAP), 42–62 (GMIS…GASI), 77–97 (LVLT…MFIP), 100–120 (GIQT…AMDM), 141–161 (AFVL…LGSA), 163–183 (LASF…IGFA), 200–220 (PVLI…NVIM), 224–244 (LLGI…LIIA), 254–274 (TAGV…MIIA), and 289–309 (ALVA…TALY).

The protein belongs to the KdgT transporter family.

The protein resides in the cell inner membrane. It carries out the reaction 2-dehydro-3-deoxy-D-gluconate(in) + H(+)(in) = 2-dehydro-3-deoxy-D-gluconate(out) + H(+)(out). Its function is as follows. Catalyzes the proton-dependent uptake of 2-keto-3-deoxygluconate (KDG) into the cell. The chain is 2-keto-3-deoxygluconate permease from Enterobacter sp. (strain 638).